The primary structure comprises 92 residues: Non-specific lipid-transfer protein 2 (92 aa).

Cystine bridges form between C4–C52, C14–C28, C29–C74, and C50–C88.

This sequence belongs to the plant LTP family. In terms of tissue distribution, expressed in seeds and, at very low levels, in pulp of fruit (at protein level).

Its function is as follows. Plant non-specific lipid-transfer proteins transfer phospholipids as well as galactolipids across membranes. May play a role in wax or cutin deposition in the cell walls of expanding epidermal cells and certain secretory tissues. This chain is Non-specific lipid-transfer protein 2, found in Actinidia deliciosa (Kiwi).